Reading from the N-terminus, the 427-residue chain is Inward rectifier potassium channel 2 (427 aa).

Residues 1 to 81 lie on the Cytoplasmic side of the membrane; that stretch reads MGSVRTNRYS…IFTTCVDIRW (81 aa). Cysteine 76 is subject to S-nitrosocysteine. The chain crosses the membrane as a helical span at residues 82–106; that stretch reads RWMLVIFCLAFVLSWLFFGCVFWLI. Residues 107–128 are Extracellular-facing; the sequence is ALLHGDLDASRESKACVSEVNS. The segment at residues 129-140 is an intramembrane region (helical; Pore-forming); it reads FTAAFLFSIETQ. The pore-forming intramembrane region spans 141-147; it reads TTIGYGF. Residues 142-147 carry the Selectivity filter motif; that stretch reads TIGYGF. The Extracellular segment spans residues 148 to 156; that stretch reads RCVTDECPV. Residues 157–178 form a helical membrane-spanning segment; the sequence is AVFMVVFQSIVGCIIDAFIIGA. Over 179 to 427 the chain is Cytoplasmic; that stretch reads VMAKMAKPKK…PRPLRRESEI (249 aa). The polyphosphoinositide (PIP2)-binding stretch occupies residues 181-208; sequence AKMAKPKKRNETLVFSHNAVIAMRDGKL. The tract at residues 384–427 is disordered; sequence SKEEDDSENGVPESTSTDTPPDIDLHNQASVPLEPRPLRRESEI. A PDZ-binding motif is present at residues 425-427; it reads SEI.

This sequence belongs to the inward rectifier-type potassium channel (TC 1.A.2.1) family. KCNJ2 subfamily. Homotetramer. Homomultimeric and heteromultimeric association with KCNJ4/Kir2.3. Can form heteromeric channels with Kir2.6/KCNJ18. Associates, via its PDZ-recognition domain, with a complex containing LIN7A, LIN7B, LIN7C, DLG1, CASK and APBA1. In terms of processing, S-nitrosylation increases the open probability and inward rectifying currents. As to expression, highly expressed in the ventricle and skeletal muscle, moderately in cerebrum and cerebellum. Only low levels are detected in kidney or lung.

The protein localises to the cell membrane. It localises to the sarcolemma. The protein resides in the T-tubule. It carries out the reaction K(+)(in) = K(+)(out). Its activity is regulated as follows. Activated by phosphatidylinositol 4,5 biphosphate (PtdIns(4,5)P2). Inward rectifier potassium channels are characterized by a greater tendency to allow potassium to flow into the cell rather than out of it. Their voltage dependence is regulated by the concentration of extracellular potassium; as external potassium is raised, the voltage range of the channel opening shifts to more positive voltages. The inward rectification is mainly due to the blockage of outward current by internal magnesium. Can be blocked by extracellular barium and cesium. Probably participates in establishing action potential waveform and excitability of neuronal and muscle tissues. The polypeptide is Inward rectifier potassium channel 2 (KCNJ2) (Oryctolagus cuniculus (Rabbit)).